The chain runs to 367 residues: Anhydro-N-acetylmuramic acid kinase (367 aa).

Residue 13 to 20 coordinates ATP; sequence GTSMDGAD.

This sequence belongs to the anhydro-N-acetylmuramic acid kinase family.

The enzyme catalyses 1,6-anhydro-N-acetyl-beta-muramate + ATP + H2O = N-acetyl-D-muramate 6-phosphate + ADP + H(+). It functions in the pathway amino-sugar metabolism; 1,6-anhydro-N-acetylmuramate degradation. The protein operates within cell wall biogenesis; peptidoglycan recycling. In terms of biological role, catalyzes the specific phosphorylation of 1,6-anhydro-N-acetylmuramic acid (anhMurNAc) with the simultaneous cleavage of the 1,6-anhydro ring, generating MurNAc-6-P. Is required for the utilization of anhMurNAc either imported from the medium or derived from its own cell wall murein, and thus plays a role in cell wall recycling. This is Anhydro-N-acetylmuramic acid kinase from Neisseria meningitidis serogroup C / serotype 2a (strain ATCC 700532 / DSM 15464 / FAM18).